Consider the following 487-residue polypeptide: Sodium-coupled neutral amino acid symporter 1 (487 aa).

The Cytoplasmic segment spans residues 1 to 74 (MMHFKSGLEL…EYIPGTTSLG (74 aa)). Ser-6 is subject to Phosphoserine. Thr-11 carries the post-translational modification Phosphothreonine. A phosphoserine mark is found at Ser-25, Ser-28, Ser-49, and Ser-52. At Thr-54 the chain carries Phosphothreonine. Phosphoserine is present on Ser-56. Residues 75-97 (MSVFNLSNAIMGSGILGLAFALA) traverse the membrane as a helical segment. Over 98–112 (NTGILLFLVLLTSVT) the chain is Extracellular. The chain crosses the membrane as a helical span at residues 113-133 (LLSIYSINLLLICSKETGCMV). Residues 134 to 147 (YEKLGEQVFGTTGK) lie on the Cytoplasmic side of the membrane. A helical transmembrane segment spans residues 148–168 (FVIFGATSLQNTGAMLSYLFI). Residues 169-188 (VKNELPSAIKFLMGKEETFS) lie on the Extracellular side of the membrane. A helical transmembrane segment spans residues 189–211 (AWYVDGRVLVVIVTFGIILPLCL). Residues 212–216 (LKNLG) lie on the Cytoplasmic side of the membrane. A helical transmembrane segment spans residues 217-237 (YLGYTSGFSLSCMVFFLIVVI). Over 238–275 (YKKFQIPCIVPELNSTISANSTNADTCTPKYVTLNSKT) the chain is Extracellular. A disulfide bond links Cys-245 and Cys-264. Residues Asn-251 and Asn-257 are each glycosylated (N-linked (GlcNAc...) asparagine). The helical transmembrane segment at 276–296 (VYALPTIAFAFVCHPSVLPIY) threads the bilayer. At 297-312 (SELKDRSQKKMQMVSN) the chain is on the cytoplasmic side. Residues 313–333 (ISFFAMFVMYFLTAIFGYLTF) traverse the membrane as a helical segment. The Extracellular segment spans residues 334-350 (YDNVQSDLLHKYQGKDD). The helical transmembrane segment at 351 to 371 (ILILTVRLAVIVAVILTVPVL) threads the bilayer. The Cytoplasmic portion of the chain corresponds to 372 to 393 (FFTVRSSLFELAKKTKFNLCRH). Residues 394 to 414 (TVVTCILLVVINLLVISIPSM) traverse the membrane as a helical segment. At 415–416 (KD) the chain is on the extracellular side. The chain crosses the membrane as a helical span at residues 417 to 437 (IFGVVGVTSANMLIFILPSSL). Residues 438–452 (YLKITDQDGDKGTQR) are Cytoplasmic-facing. A helical transmembrane segment spans residues 453–473 (IWAALFLGLGVLFSLVSIPLV). At 474-487 (IYDWACSSSSDEGH) the chain is on the extracellular side.

This sequence belongs to the amino acid/polyamine transporter 2 family. Post-translationally, N-glycosylation plays an important role in the L-glutamine transport.

The protein resides in the cell membrane. The catalysed reaction is L-glutamine(in) + Na(+)(in) = L-glutamine(out) + Na(+)(out). It carries out the reaction L-alanine(in) + Na(+)(in) = L-alanine(out) + Na(+)(out). It catalyses the reaction L-asparagine(in) + Na(+)(in) = L-asparagine(out) + Na(+)(out). The enzyme catalyses L-histidine(in) + Na(+)(in) = L-histidine(out) + Na(+)(out). The catalysed reaction is L-serine(in) + Na(+)(in) = L-serine(out) + Na(+)(out). It carries out the reaction L-cysteine(in) + Na(+)(in) = L-cysteine(out) + Na(+)(out). It catalyses the reaction L-methionine(in) + Na(+)(in) = L-methionine(out) + Na(+)(out). The enzyme catalyses glycine(in) + Na(+)(in) = glycine(out) + Na(+)(out). The catalysed reaction is L-threonine(in) + Na(+)(in) = L-threonine(out) + Na(+)(out). It carries out the reaction L-proline(in) + Na(+)(in) = L-proline(out) + Na(+)(out). Its activity is regulated as follows. Inhibited by alpha-(methylamino)isobutyric acid (MeAIB). Inhibited by lithium, potassium, choline ions, N-methylglucamine. The pH dependence has an allosteric effect on the transport. Symporter that cotransports short-chain neutral amino acids and sodium ions from the extraccellular to the intracellular side of the cell membrane. The transport is elctrogenic, pH dependent and driven by the Na(+) electrochemical gradient. Participates in the astroglia-derived glutamine transport into GABAergic interneurons for neurotransmitter GABA de novo synthesis. May also contributes to amino acid transport in placental trophoblast. Regulates synaptic plasticity. The sequence is that of Sodium-coupled neutral amino acid symporter 1 from Pongo abelii (Sumatran orangutan).